The chain runs to 498 residues: Heat stress transcription factor A-3 (498 aa).

The tract at residues 156–180 is disordered; it reads RRRSSPTQQSGLQPGSSGESGLDPE. Positions 160–174 are enriched in polar residues; it reads SPTQQSGLQPGSSGE. The stretch at 180-235 forms a coiled coil; that stretch reads ELNTLRREKSALLQEVTRLKQEHLQTIEQMSTLNQRLESAEDRQKQMVSFLAKLLQ. The tract at residues 184–234 is hydrophobic repeat HR-A/B; the sequence is LRREKSALLQEVTRLKQEHLQTIEQMSTLNQRLESAEDRQKQMVSFLAKLL. The Nuclear localization signal motif lies at 258 to 263; it reads KRKFLK. Residues 263–291 are disordered; that stretch reads KHVPHGNIDSGESSSQHTGESNLDFSPTS. Residues 272–291 are compositionally biased toward polar residues; the sequence is SGESSSQHTGESNLDFSPTS. A Nuclear export signal motif is present at residues 309 to 316; it reads LEDGDLNL. A disordered region spans residues 356-382; that stretch reads LEIPPASGPRGQDPTIGRSKGKNVLSP.

The protein belongs to the HSF family. Class A subfamily. As to quaternary structure, homotrimer. Post-translationally, exhibits temperature-dependent phosphorylation.

The protein localises to the cytoplasm. Its subcellular location is the nucleus. Transcriptional regulator that specifically binds DNA of heat shock promoter elements (HSE). This is Heat stress transcription factor A-3 (HSFA3) from Oryza sativa subsp. japonica (Rice).